A 165-amino-acid chain; its full sequence is Inorganic pyrophosphatase (165 aa).

3 residues coordinate substrate: K21, R35, and Y47. D57, D62, and D94 together coordinate Mg(2+). Y131 is a binding site for substrate.

Belongs to the PPase family. In terms of assembly, homotrimer. In presence of divalent cations the trimers aggregate to form a hexamer. Requires Mg(2+) as cofactor.

It is found in the cytoplasm. The enzyme catalyses diphosphate + H2O = 2 phosphate + H(+). Catalyzes the hydrolysis of inorganic pyrophosphate (PPi) forming two phosphate ions. This Bacillus sp. (strain PS3) protein is Inorganic pyrophosphatase.